The following is a 149-amino-acid chain: MESLYRVPFTVLECPNLKLKKPSWLHMPSAMTVYAMVVVSYFLITGGIIYDVIVEPPSVGSMTDEHGHQRPVAFLAYRVNGQYIMEGLASSFLFTMGGLGFIILDRSNTPNIPKLNRFLLLFIGFVCVLLSFFMARVFMRMKLPGYLMG.

Residues 1–32 (MESLYRVPFTVLECPNLKLKKPSWLHMPSAMT) are Cytoplasmic-facing. The chain crosses the membrane as a helical span at residues 33-53 (VYAMVVVSYFLITGGIIYDVI). Topologically, residues 54–83 (VEPPSVGSMTDEHGHQRPVAFLAYRVNGQY) are extracellular. The helical transmembrane segment at 84-104 (IMEGLASSFLFTMGGLGFIIL) threads the bilayer. At 105–117 (DRSNTPNIPKLNR) the chain is on the cytoplasmic side. Residues 118–138 (FLLLFIGFVCVLLSFFMARVF) form a helical membrane-spanning segment. Residues 139–149 (MRMKLPGYLMG) are Extracellular-facing.

Belongs to the OSTC family. Specific component of the STT3A-containing form of the oligosaccharyltransferase (OST) complex.

The protein localises to the membrane. Its pathway is protein modification; protein glycosylation. Functionally, specific component of the STT3A-containing form of the oligosaccharyl transferase (OST) complex that catalyzes the initial transfer of a defined glycan (Glc(3)Man(9)GlcNAc(2) in eukaryotes) from the lipid carrier dolichol-pyrophosphate to an asparagine residue within an Asn-X-Ser/Thr consensus motif in nascent polypeptide chains, the first step in protein N-glycosylation. N-glycosylation occurs cotranslationally and the complex associates with the Sec61 complex at the channel-forming translocon complex that mediates protein translocation across the endoplasmic reticulum (ER). All subunits are required for a maximal enzyme activity. The chain is Oligosaccharyltransferase complex subunit ostc-A from Xenopus laevis (African clawed frog).